Consider the following 481-residue polypeptide: MFS transporter eqxG (481 aa).

The segment covering 1-13 has biased composition (low complexity); it reads MATTDPAIAAPDD. Residues 1–58 form a disordered region; that stretch reads MATTDPAIAAPDDSQLEAGRENIRANVGDALEKPSSSTGTMVDEPTDPNVVDWDGPHD. Residue asparagine 64 is glycosylated (N-linked (GlcNAc...) asparagine). Residues 72–92 traverse the membrane as a helical segment; sequence LHLVIVSLFTLAANLAATMFA. Asparagine 106 carries N-linked (GlcNAc...) asparagine glycosylation. Transmembrane regions (helical) follow at residues 111–131, 146–166, 169–189, 201–221, 276–296, 315–335, 353–373, 380–400, 403–423, and 439–459; these read AMTVSLYVLGFALGPLLLAPL, FVYVVFTIGCAFSTNVAMFLV, IICGCAASGPMSIGGGTVADL, LFTVGPLLGPSGLIGVATVIF, PIVLLISLYTGILFGLIFLLF, GLAYLGLGIGMILGLVLFSVL, LILMKWLGPITPLGLFIYGWT, WIVPIIGTFVVGFGSLFVVIP, IYLVDAFGAEAAASAMAANLL, and LYVSLGLGWGNSVLGFICLLF.

The protein belongs to the major facilitator superfamily.

Its subcellular location is the cell membrane. Efflux pump that might be required for efficient secretion of equisetin or other secondary metabolies produced by the equisetin gene cluster. The polypeptide is MFS transporter eqxG (Fusarium heterosporum).